The primary structure comprises 478 residues: POU domain, class 2, transcription factor 2 (478 aa).

5 disordered regions span residues 1–82 (MVHS…PPQA), 167–199 (QAVT…EASD), 275–298 (SSLP…GRRR), 357–391 (PCSA…PLSQ), and 409–478 (TLHP…PYQP). A compositionally biased stretch (basic and acidic residues) spans 12-37 (RMSKPLEAEKQGLDSPSEHTDTERNG). Residues 38-60 (PDTNHQNPQNKTSPFSVSPTGPS) show a composition bias toward polar residues. The region spanning 195-269 (EEASDLEELE…LLEKWLNDAE (75 aa)) is the POU-specific domain. A compositionally biased stretch (polar residues) spans 275–285 (SSLPSPNQLSR). The homeobox DNA-binding region spans 297-356 (RRKKRTSIETNVRFALEKSFLANQKPTSEEILLIAEQLHMEKEVIRVWFCNRRQKEKRIN). The tract at residues 389-410 (LSQASSSLSTTVTTLSSAVGTL) is leucine-zipper. The span at 416 to 425 (AGGGAAGGGA) shows a compositional bias: gly residues.

Belongs to the POU transcription factor family. Class-2 subfamily. Interacts with NR3C1, AR and PGR. Interacts with POU2AF1; the interaction increases POU2F2 transactivation activity. As to expression, predominantly expressed in B-cells.

It is found in the nucleus. Its activity is regulated as follows. Transactivation activity is enhanced by transcriptional coactivator POU2AF1. Functionally, transcription factor that specifically binds to the octamer motif (5'-ATTTGCAT-3'). Regulates IL6 expression in B cells with POU2AF1. Regulates transcription in a number of tissues in addition to activating immunoglobulin gene expression. Modulates transcription transactivation by NR3C1, AR and PGR. This chain is POU domain, class 2, transcription factor 2 (POU2F2), found in Sus scrofa (Pig).